The chain runs to 355 residues: Anthranilate phosphoribosyltransferase (355 aa).

5-phospho-alpha-D-ribose 1-diphosphate-binding positions include Gly-99, 102–103 (GD), Thr-107, 109–112 (NIST), 127–135 (KHGNRSVSS), and Ser-139. Gly-99 is a binding site for anthranilate. Mg(2+) is bound at residue Ser-111. Asn-130 provides a ligand contact to anthranilate. Arg-185 provides a ligand contact to anthranilate. Mg(2+) is bound by residues Asp-243 and Glu-244.

Belongs to the anthranilate phosphoribosyltransferase family. In terms of assembly, homodimer. It depends on Mg(2+) as a cofactor.

It carries out the reaction N-(5-phospho-beta-D-ribosyl)anthranilate + diphosphate = 5-phospho-alpha-D-ribose 1-diphosphate + anthranilate. The protein operates within amino-acid biosynthesis; L-tryptophan biosynthesis; L-tryptophan from chorismate: step 2/5. Functionally, catalyzes the transfer of the phosphoribosyl group of 5-phosphorylribose-1-pyrophosphate (PRPP) to anthranilate to yield N-(5'-phosphoribosyl)-anthranilate (PRA). The protein is Anthranilate phosphoribosyltransferase of Pseudoalteromonas translucida (strain TAC 125).